The chain runs to 256 residues: 5-keto-4-deoxy-D-glucarate aldolase (256 aa).

H50 acts as the Proton acceptor in catalysis. Q151 is a binding site for substrate. E153 serves as a coordination point for Mg(2+). S178 and D179 together coordinate substrate. Position 179 (D179) interacts with Mg(2+).

This sequence belongs to the HpcH/HpaI aldolase family. KDGluc aldolase subfamily. In terms of assembly, homohexamer; trimer of dimers. Mg(2+) serves as cofactor.

The enzyme catalyses 5-dehydro-4-deoxy-D-glucarate = 2-hydroxy-3-oxopropanoate + pyruvate. It catalyses the reaction 2-dehydro-3-deoxy-D-glucarate = 2-hydroxy-3-oxopropanoate + pyruvate. It participates in carbohydrate acid metabolism; galactarate degradation; D-glycerate from galactarate: step 2/3. Its function is as follows. Catalyzes the reversible retro-aldol cleavage of both 5-keto-4-deoxy-D-glucarate and 2-keto-3-deoxy-D-glucarate to pyruvate and tartronic semialdehyde. The protein is 5-keto-4-deoxy-D-glucarate aldolase of Klebsiella pneumoniae subsp. pneumoniae (strain ATCC 700721 / MGH 78578).